Consider the following 130-residue polypeptide: Sirohydrochlorin cobaltochelatase (130 aa).

The active-site Proton acceptor is His-12. Residue His-12 coordinates Co(2+). His-12 is a Ni(2+) binding site. Substrate contacts are provided by residues Glu-48 and 73 to 78 (LASGVH). His-78 contacts Co(2+). His-78 contributes to the Ni(2+) binding site.

Belongs to the CbiX family. CbiXS subfamily. Homotetramer; dimer of dimers.

The enzyme catalyses Co-sirohydrochlorin + 2 H(+) = sirohydrochlorin + Co(2+). The catalysed reaction is Ni-sirohydrochlorin + 2 H(+) = sirohydrochlorin + Ni(2+). It functions in the pathway cofactor biosynthesis; adenosylcobalamin biosynthesis; cob(II)yrinate a,c-diamide from sirohydrochlorin (anaerobic route): step 1/10. In terms of biological role, catalyzes the insertion of Co(2+) into sirohydrochlorin as part of the anaerobic pathway to cobalamin biosynthesis. Involved in the biosynthesis of the unique nickel-containing tetrapyrrole coenzyme F430, the prosthetic group of methyl-coenzyme M reductase (MCR), which plays a key role in methanogenesis and anaerobic methane oxidation. Catalyzes the insertion of Ni(2+) into sirohydrochlorin to yield Ni-sirohydrochlorin. The protein is Sirohydrochlorin cobaltochelatase of Methanosarcina barkeri (strain Fusaro / DSM 804).